Consider the following 125-residue polypeptide: Small ribosomal subunit protein eS8 (125 aa).

The interval 1–20 is disordered; sequence MIWQGRSRRKPSGGFYRKAR.

This sequence belongs to the eukaryotic ribosomal protein eS8 family. In terms of assembly, part of the 30S ribosomal subunit.

This Archaeoglobus fulgidus (strain ATCC 49558 / DSM 4304 / JCM 9628 / NBRC 100126 / VC-16) protein is Small ribosomal subunit protein eS8 (rps8e).